The sequence spans 563 residues: MTKTSRPLYISYAGPSLLEMPLLNKGSAFTPQERVEFNLIGLLPQNVETIEEQVTRVYSQYKQCASDLDKHIYLRSIQDNNETLFFRLLDSHLDEMLPIIYTPTVGQACQEFSKIYRTHRGLFISYPERDRIDDILRSATKDRIKIIVVTDSERILGLGDQGIGGMGIPIGKLSLYTACGGISPAYTLPIVLDVGTNNRELLDDPMYMGWRHERVSGKEYEDFIALFIDAVQRRWPDVLLQFEDFAQSNAMPLLEKYRDELCCFNDDIQGTASVAVGTLLAACKAKNETLGQQKVVFVGAGSAGCGIAEHIIAAMRIEGLSESEARKRIFMVDRFGLLTESMDNLLDFQKRLAQKTADVSGWTAGSEAFPQLLDVVTHAGATVMIGVSGQRGLFTEQVIRELHKHCAKPLVMPLSNPTSKVEATPEEILRWTDGNALVATGSPFAPVEINGRTVHIAQCNNSYIFPGIGLGVVACKASRITDRMLMAASNALAECSPMVTGKGDAVLPPLKEIQQVSRKIALAVAREAQAEGLALETTEEALLEAIERNFWLPGYRAYRRRSV.

Tyr101 functions as the Proton donor in the catalytic mechanism. Position 154 (Arg154) interacts with NAD(+). Lys172 functions as the Proton acceptor in the catalytic mechanism. A divalent metal cation-binding residues include Glu243, Asp244, and Asp267. NAD(+)-binding residues include Asp267 and Asn416.

The protein belongs to the malic enzymes family. In terms of assembly, homotetramer. Mg(2+) serves as cofactor. Requires Mn(2+) as cofactor.

The enzyme catalyses (S)-malate + NAD(+) = pyruvate + CO2 + NADH. The catalysed reaction is oxaloacetate + H(+) = pyruvate + CO2. This Pseudomonas syringae pv. syringae (strain B728a) protein is NAD-dependent malic enzyme.